We begin with the raw amino-acid sequence, 286 residues long: uncharacterized protein (286 aa).

An N-terminal signal peptide occupies residues 1–19 (MISKEYISLLSALLTKGYS).

This is an uncharacterized protein from Acidianus filamentous virus 2 (isolate Italy/Pozzuoli) (AFV-2).